The chain runs to 192 residues: UPF0149 protein KPK_0755 (192 aa).

The protein belongs to the UPF0149 family.

The sequence is that of UPF0149 protein KPK_0755 from Klebsiella pneumoniae (strain 342).